The sequence spans 232 residues: Expansin-YoaJ (232 aa).

The signal sequence occupies residues 1–25 (MKKIMSAFVGMVLLTIFCFSPQASA). Positions 58–127 (ITAINPADLN…MKDGKINIKW (70 aa)) constitute an Expansin-like EG45 domain.

Its subcellular location is the secreted. The protein localises to the cell wall. Functionally, may promote colonization of plant roots. May cause loosening and extension of plant cell walls by disrupting non-covalent bonding between cellulose microfibrils and matrix glucans. Has very low expansin activity (in vitro). No enzymatic activity has been found. Binds to peptidoglycan and to plant cell walls. This is Expansin-YoaJ (yoaJ) from Bacillus subtilis (strain 168).